The sequence spans 355 residues: Elongation factor Ts (355 aa).

The tract at residues 82-85 (TDFV) is involved in Mg(2+) ion dislocation from EF-Tu.

Belongs to the EF-Ts family.

It localises to the cytoplasm. Associates with the EF-Tu.GDP complex and induces the exchange of GDP to GTP. It remains bound to the aminoacyl-tRNA.EF-Tu.GTP complex up to the GTP hydrolysis stage on the ribosome. In Helicobacter pylori (strain ATCC 700392 / 26695) (Campylobacter pylori), this protein is Elongation factor Ts (tsf).